A 571-amino-acid chain; its full sequence is MRSSGTYENDPSGEITSTSPKQSKQKKPTKFRERMRRWLQNGKNNNHQGEEDVPEIFNKNFYPQTGMTAFNNNDNGEVQDVTNNFFLPSEDESGPVQSSVKTFLTGNNDEDSNFQQNQNPKQKSELPKSPYRQKPTQEIALLKDLFVTNKYDDPYLNSSTRFGNITSTFPSSLSLRTVTLQTIKKRIDCISAKKKEVWKTEEKFLKDILMWLQSSNFEDPDTISLIHEIEKIFEEDIHFEQNVSDCLKEISNNFEYICMRETQLINEGNILKNDLKKYAKAREHKGEKHEDTEVLREKVISSQKSFDVTKRHYKHAISITTRQLFMNLAFEYYENCSDMKDISRKYLQESLSTLQTIDTLSFSEELEKIRKRRFDKFWAKTNPDPTNNIQKFVNMRTGVAGFNDSLMNHLYGKLSFGVAPVEEELQNSQPEHTDVPENVWNEVLSDYNSMDGNPITSNKFLSAKELEPDQLVELLAQEKEEKEAKNISSSTAEVPSISQPEIKKENLESNDSLILRSTKRNVNVNAASLRNLSIKKTQVKPESASEESKVLAAALNDAKQNLDENVWRTPI.

Disordered stretches follow at residues methionine 1–valine 53, methionine 67–glutamine 133, and lysine 482–glutamate 501. Positions serine 23–arginine 37 are enriched in basic residues. Composition is skewed to polar residues over residues methionine 67–phenylalanine 86, proline 95–lysine 121, and asparagine 486–glutamine 499. Coiled coils occupy residues aspartate 469–asparagine 486 and glutamate 542–valine 566.

In terms of assembly, interacts directly with ADY3. Probable component of a spindle pole body (SPB) complex composed of ADY3, SSP1, DON1, MPC54, SPO21/MPC70, NUD1 and CNM67. Phosphorylated.

The protein localises to the prospore membrane. Functionally, involved in the pathway that organizes the shaping and sizing of the prospore membrane (PSM) during sporulation. May be required for the formation of ADY3 and DON1-containing protein coats at the leading edge of the PSMs during meiosis II. The chain is Sporulation-specific protein 1 (SSP1) from Saccharomyces cerevisiae (strain ATCC 204508 / S288c) (Baker's yeast).